We begin with the raw amino-acid sequence, 198 residues long: MYDYIKGQLTKITAKYIVVEANGLGYMINVANPYSFTDSVNQLVTIYLHQVIREDAHLLFGFHTKDEKDVFLKLISVSGIGPTTALAIVAVDDNEGLVNAIDNSDIKYLMKFPKIGKKTAQQMVLDLAGKFVEAPQETGNTKARSNKAGNTQLDEAIEALLALGYKATELKKIRAFFEGTSETAEQYIKSALKLLMKG.

Residues 1–63 (MYDYIKGQLT…EDAHLLFGFH (63 aa)) form a domain I region. Residues 64–142 (TKDEKDVFLK…EAPQETGNTK (79 aa)) are domain II. The flexible linker stretch occupies residues 143–147 (ARSNK). The interval 148–198 (AGNTQLDEAIEALLALGYKATELKKIRAFFEGTSETAEQYIKSALKLLMKG) is domain III.

The protein belongs to the RuvA family. Homotetramer. Forms an RuvA(8)-RuvB(12)-Holliday junction (HJ) complex. HJ DNA is sandwiched between 2 RuvA tetramers; dsDNA enters through RuvA and exits via RuvB. An RuvB hexamer assembles on each DNA strand where it exits the tetramer. Each RuvB hexamer is contacted by two RuvA subunits (via domain III) on 2 adjacent RuvB subunits; this complex drives branch migration. In the full resolvosome a probable DNA-RuvA(4)-RuvB(12)-RuvC(2) complex forms which resolves the HJ.

The protein resides in the cytoplasm. Its function is as follows. The RuvA-RuvB-RuvC complex processes Holliday junction (HJ) DNA during genetic recombination and DNA repair, while the RuvA-RuvB complex plays an important role in the rescue of blocked DNA replication forks via replication fork reversal (RFR). RuvA specifically binds to HJ cruciform DNA, conferring on it an open structure. The RuvB hexamer acts as an ATP-dependent pump, pulling dsDNA into and through the RuvAB complex. HJ branch migration allows RuvC to scan DNA until it finds its consensus sequence, where it cleaves and resolves the cruciform DNA. The polypeptide is Holliday junction branch migration complex subunit RuvA (Streptococcus pyogenes serotype M18 (strain MGAS8232)).